A 236-amino-acid polypeptide reads, in one-letter code: Protein YIPF6 (236 aa).

Position 2 is an N-acetylalanine (Ala2). Residues 2–84 (AEAEDSPGEQ…HVLYPRKSNA (83 aa)) are Cytoplasmic-facing. Ser7 is modified (phosphoserine). A helical membrane pass occupies residues 85–105 (LLRDWDLWGPLILCVTLALML). The Lumenal segment spans residues 106–116 (QKSSIDGKNDG). A helical transmembrane segment spans residues 117-137 (GGPEFAEVFVIIWFGAVTITL). The Cytoplasmic segment spans residues 138–147 (NSKLLGGNIS). Residues 148–168 (FFQSLCVLGYCILPLNIAMLI) traverse the membrane as a helical segment. The Lumenal portion of the chain corresponds to 169–185 (CRLLLLAGQGPINFMIR). Residues 186 to 206 (LFVVLLMFAWSVVASTAFLAD) form a helical membrane-spanning segment. At 207-213 (SQPPNRK) the chain is on the cytoplasmic side. Residues 214-234 (ALAVYPVFLFYFVISWMILTF) traverse the membrane as a helical segment. Over 235-236 (TP) the chain is Lumenal.

The protein belongs to the YIP1 family. As to quaternary structure, predominantly interacts with YIPF1 or YIPF2, but may also form a ternary complex with YIPF1 and YIPF2. This interaction may stabilize YIPF1 and YIPF2.

The protein localises to the golgi apparatus membrane. May be required for stable YIPF1 and YIPF2 protein expression. The polypeptide is Protein YIPF6 (Yipf6) (Mus musculus (Mouse)).